Here is a 1522-residue protein sequence, read N- to C-terminus: DNA topoisomerase 2-binding protein 1 (1522 aa).

BRCT domains follow at residues V101–D189 and F195–T284. T298 is subject to Phosphothreonine. Residue S301 is modified to Phosphoserine. BRCT domains are found at residues A354 to H444, T548 to L633, and T641 to I738. The tract at residues I756–L891 is interaction with CIP2A. Phosphothreonine is present on residues T779 and T848. The Nuclear localization signal motif lies at P852–K858. S860 carries the post-translational modification Phosphoserine. Phosphothreonine is present on T861. Phosphoserine is present on residues S864, S886, and S888. The BRCT 6 domain occupies E900–H991. The residue at position 1002 (S1002) is a Phosphoserine. A disordered region spans residues V1018–K1058. Residues D1024–V1036 show a composition bias toward acidic residues. Polar residues predominate over residues M1039–K1058. A phosphothreonine mark is found at T1062 and T1064. Over residues S1083–S1114 the composition is skewed to polar residues. The interval S1083–R1118 is disordered. BRCT domains lie at E1259–W1351 and I1389–L1486. Residues T1501–H1522 form a disordered region. S1504 is subject to Phosphoserine. Residues K1517 to R1520 carry the Nuclear localization signal motif.

Belongs to the TOPBP1 family. As to quaternary structure, interacts (via BRCT domains 1 and 2) with (phosphorylated) MDC1; promoting TOPBP1 recruitment to DNA damage sites during mitosis. Interacts (via BRCT domains 7 and 8) with (autophosphorylated) ATR; promoting activation of ATR. Interacts (via BRCT domains 7 and 8) with (phosphorylated) POLQ; specifically binds POLQ phosphorylated by PLK1, promoting POLQ recruitment to DNA damage sites. Interacts (via BRCT domains 1 and 2) with (phosphorylated) RAD9A. Interacts (via BRCT domain 2) with (phosphorylated) TP53BP1. Interacts (via BRCT domain 2) with (phosphorylated) HTATSF1. Interacts (via BRCT domains 7 and 8) with (phosphorylated) RAD51; promoting RAD51 recruitment to damaged chromatin. Interacts with CIP2A; forming the CIP2A-TOPBP1 complex. Interacts with POLE. Interacts with UBR5. Interacts with E2F1. Interacts with PML. Interacts with SMARCA2. Interacts with SMARCA4. Interacts with RHNO1. May interact with TOP2B. Interacts with TICRR. Interacts with HELB. Interacts (via residues 1233-1522) with RECQL4. Phosphorylated on serine and threonine residues in response to X-ray irradiation. In terms of processing, ubiquitinated and degraded by the proteasome. X-ray irradiation reduces ubiquitination. Deubiquitinated by USP13; leading to TOPBP1 stabilizion and activation of the ATR-TOPBP1 axis pathway. Highly expressed in heart, brain, placenta, lung and kidney.

The protein resides in the nucleus. The protein localises to the chromosome. Its subcellular location is the cytoplasm. It is found in the cytoskeleton. It localises to the microtubule organizing center. The protein resides in the centrosome. The protein localises to the spindle pole. Scaffold protein that acts as a key protein-protein adapter in DNA replication and DNA repair. Composed of multiple BRCT domains, which specifically recognize and bind phosphorylated proteins, bringing proteins together into functional combinations. Required for DNA replication initiation but not for the formation of pre-replicative complexes or the elongation stages. Necessary for the loading of replication factors onto chromatin, including GMNC, CDC45, DNA polymerases and components of the GINS complex. Plays a central role in DNA repair by bridging proteins and promoting recruitment of proteins to DNA damage sites. Involved in double-strand break (DSB) repair via homologous recombination in S-phase by promoting the exchange between the DNA replication factor A (RPA) complex and RAD51. Mechanistically, TOPBP1 is recruited to DNA damage sites in S-phase via interaction with phosphorylated HTATSF1, and promotes the loading of RAD51, thereby facilitating RAD51 nucleofilaments formation and RPA displacement, followed by homologous recombination. Involved in microhomology-mediated end-joining (MMEJ) DNA repair by promoting recruitment of polymerase theta (POLQ) to DNA damage sites during mitosis. MMEJ is an alternative non-homologous end-joining (NHEJ) machinery that takes place during mitosis to repair DSBs in DNA that originate in S-phase. Recognizes and binds POLQ phosphorylated by PLK1, enabling its recruitment to DSBs for subsequent repair. Involved in G1 DNA damage checkpoint by acting as a molecular adapter that couples TP53BP1 and the 9-1-1 complex. In response to DNA damage, triggers the recruitment of checkpoint signaling proteins on chromatin, which activate the CHEK1 signaling pathway and block S-phase progression. Acts as an activator of the kinase activity of ATR. Also required for chromosomal stability when DSBs occur during mitosis by forming filamentous assemblies that bridge MDC1 and tether broken chromosomes during mitosis. Together with CIP2A, plays an essential role in the response to genome instability generated by the presence of acentric chromosome fragments derived from shattered chromosomes within micronuclei. Micronuclei, which are frequently found in cancer cells, consist of chromatin surrounded by their own nuclear membrane: following breakdown of the micronuclear envelope, a process associated with chromothripsis, the CIP2A-TOPBP1 complex tethers chromosome fragments during mitosis to ensure clustered segregation of the fragments to a single daughter cell nucleus, facilitating re-ligation with limited chromosome scattering and loss. Recruits the SWI/SNF chromatin remodeling complex to E2F1-responsive promoters, thereby down-regulating E2F1 activity and inhibiting E2F1-dependent apoptosis during G1/S transition and after DNA damage. This chain is DNA topoisomerase 2-binding protein 1, found in Homo sapiens (Human).